A 398-amino-acid polypeptide reads, in one-letter code: S-adenosylmethionine synthase (398 aa).

ATP is bound at residue H19. A Mg(2+)-binding site is contributed by D21. E47 contacts K(+). Residues E60 and Q103 each contribute to the L-methionine site. Residues 103 to 113 are flexible loop; that stretch reads QSPDIAQGVDV. ATP contacts are provided by residues 177-179, 243-244, D252, 258-259, A275, and K279; these read DGK, RF, and RK. D252 serves as a coordination point for L-methionine. K283 contacts L-methionine.

It belongs to the AdoMet synthase family. Homotetramer; dimer of dimers. Mg(2+) serves as cofactor. The cofactor is K(+).

It is found in the cytoplasm. It carries out the reaction L-methionine + ATP + H2O = S-adenosyl-L-methionine + phosphate + diphosphate. It functions in the pathway amino-acid biosynthesis; S-adenosyl-L-methionine biosynthesis; S-adenosyl-L-methionine from L-methionine: step 1/1. Its function is as follows. Catalyzes the formation of S-adenosylmethionine (AdoMet) from methionine and ATP. The overall synthetic reaction is composed of two sequential steps, AdoMet formation and the subsequent tripolyphosphate hydrolysis which occurs prior to release of AdoMet from the enzyme. In Symbiobacterium thermophilum (strain DSM 24528 / JCM 14929 / IAM 14863 / T), this protein is S-adenosylmethionine synthase.